Consider the following 278-residue polypeptide: Cell division protein FtsQ (278 aa).

Topologically, residues 1–6 (MNATLR) are cytoplasmic. Residues 7-27 (ILAWLIAVALVALPVVAVLNG) form a helical membrane-spanning segment. At 28 to 278 (WVGAERWPLA…SPFAIPGFKT (251 aa)) the chain is on the periplasmic side. One can recognise a POTRA domain in the interval 34–103 (WPLARLRVSG…DVLEVHVVEH (70 aa)).

Belongs to the FtsQ/DivIB family. FtsQ subfamily. Part of a complex composed of FtsB, FtsL and FtsQ.

Its subcellular location is the cell inner membrane. Essential cell division protein. May link together the upstream cell division proteins, which are predominantly cytoplasmic, with the downstream cell division proteins, which are predominantly periplasmic. May control correct divisome assembly. In Xanthomonas campestris pv. campestris (strain ATCC 33913 / DSM 3586 / NCPPB 528 / LMG 568 / P 25), this protein is Cell division protein FtsQ.